The primary structure comprises 183 residues: Holliday junction branch migration complex subunit RuvA (183 aa).

The domain I stretch occupies residues 1–63; the sequence is MIVGLIGVVE…EDANLLYGFL (63 aa). The segment at 64–139 is domain II; that stretch reads EESEKILFER…FFIQDENRPA (76 aa). A region of interest (flexible linker) is located at residue Ala139. The tract at residues 139–183 is domain III; the sequence is ARNEVFLALESLGFKSAEINKVLKTLKPNLSIEAAIKEALQQLRS.

This sequence belongs to the RuvA family. Homotetramer. Forms an RuvA(8)-RuvB(12)-Holliday junction (HJ) complex. HJ DNA is sandwiched between 2 RuvA tetramers; dsDNA enters through RuvA and exits via RuvB. An RuvB hexamer assembles on each DNA strand where it exits the tetramer. Each RuvB hexamer is contacted by two RuvA subunits (via domain III) on 2 adjacent RuvB subunits; this complex drives branch migration. In the full resolvosome a probable DNA-RuvA(4)-RuvB(12)-RuvC(2) complex forms which resolves the HJ.

The protein resides in the cytoplasm. In terms of biological role, the RuvA-RuvB-RuvC complex processes Holliday junction (HJ) DNA during genetic recombination and DNA repair, while the RuvA-RuvB complex plays an important role in the rescue of blocked DNA replication forks via replication fork reversal (RFR). RuvA specifically binds to HJ cruciform DNA, conferring on it an open structure. The RuvB hexamer acts as an ATP-dependent pump, pulling dsDNA into and through the RuvAB complex. HJ branch migration allows RuvC to scan DNA until it finds its consensus sequence, where it cleaves and resolves the cruciform DNA. The polypeptide is Holliday junction branch migration complex subunit RuvA (Helicobacter pylori (strain HPAG1)).